Here is a 236-residue protein sequence, read N- to C-terminus: E3 ubiquitin-protein ligase RNF187 (236 aa).

The segment at Cys12 to Ala53 adopts an RING-type zinc-finger fold. Arg98 and Arg109 each carry asymmetric dimethylarginine; by PRMT1. A Glycyl lysine isopeptide (Lys-Gly) (interchain with G-Cter in ubiquitin) cross-link involves residue Lys195. Residue Ser200 is modified to Phosphoserine. Glycyl lysine isopeptide (Lys-Gly) (interchain with G-Cter in ubiquitin) cross-links involve residues Lys224 and Lys225.

In terms of assembly, homodimer. Interacts with JUN, independently of JUN phosphorylation. Interacts (via C-terminus) with TRIM7. Ubiquitinated; undergoes 'Lys-48'-linked autoubiquitination in the absence of growth factors and MAP3K1-induced 'Lys-63'-linked polyubiquitination. 'Lys-48'-autoubiquitination leads to degradation by the proteasome, while MAP3K1-induced 'Lys-63'-linked polyubiquitination results in the stabilization of the protein. 'Lys-48'- and 'Lys-63'-linked polyubiquitinations occur most probably on the same 3 C-terminal lysine residues (Lys-195, Lys-224 and Lys-225) and are thus mutually exclusive. Other sites of ubiquitination are not excluded. 'Lys-63'-linked polyubiquitination by TRIM7 in response to growth factor signaling via the MEK/ERK pathway enhances protein stability. Post-translationally, arginine methylation by PRMT1 stabilizes RNF187 by facilitating K63-linked ubiquitin chain formation, and enables dimerization, c-Jun interaction and subsequent AP1 target gene expression.

It localises to the cytoplasm. The protein resides in the nucleus. The catalysed reaction is S-ubiquitinyl-[E2 ubiquitin-conjugating enzyme]-L-cysteine + [acceptor protein]-L-lysine = [E2 ubiquitin-conjugating enzyme]-L-cysteine + N(6)-ubiquitinyl-[acceptor protein]-L-lysine.. Its pathway is protein modification; protein ubiquitination. In terms of biological role, E3 ubiquitin-protein ligase that acts as a coactivator of JUN-mediated gene activation in response to growth factor signaling via the MAP3K1 pathway, independently from MAPK8. This Mus musculus (Mouse) protein is E3 ubiquitin-protein ligase RNF187 (Rnf187).